The chain runs to 879 residues: Metabotropic glutamate receptor 3 (879 aa).

An N-terminal signal peptide occupies residues 1–22 (MKMLTRLQVLTLALFSKGFLLS). The Extracellular portion of the chain corresponds to 23 to 576 (LGDHNFLRRE…EDYIRWEDAW (554 aa)). A disulfide bond links Cys-57 and Cys-99. Residues Ser-151 and 172 to 174 (AST) each bind L-glutamate. Asn-209 carries N-linked (GlcNAc...) asparagine glycosylation. Position 222 (Tyr-222) interacts with L-glutamate. Disulfide bonds link Cys-240-Cys-527, Cys-361-Cys-373, Cys-412-Cys-419, Cys-509-Cys-528, Cys-513-Cys-531, Cys-534-Cys-546, and Cys-549-Cys-562. N-linked (GlcNAc...) asparagine glycosylation occurs at Asn-292. Residue Asp-301 coordinates L-glutamate. Residue Lys-389 coordinates L-glutamate. 2 N-linked (GlcNAc...) asparagine glycosylation sites follow: Asn-414 and Asn-439. A helical transmembrane segment spans residues 577-599 (AIGPVTIACLGFMCTCMVVTVFI). Over 600–613 (KHNNTPLVKASGRE) the chain is Cytoplasmic. Residues 614–634 (LCYILLFGVGLSYCMTFFFIA) form a helical membrane-spanning segment. The Extracellular portion of the chain corresponds to 635–645 (KPSPVICALRR). The chain crosses the membrane as a helical span at residues 646–664 (LGLGSSFAICYSALLTKTN). The Cytoplasmic portion of the chain corresponds to 665–688 (CIARIFDGVKNGAQRPKFISPSSQ). A helical transmembrane segment spans residues 689–709 (VFICLGLILVQIVMVSVWLIL). The Extracellular portion of the chain corresponds to 710 to 734 (EAPGTRRYTLAEKRETVILKCNVKD). Residues 735–756 (SSMLISLTYDVILVILCTVYAF) traverse the membrane as a helical segment. At 757 to 769 (KTRKCPENFNEAK) the chain is on the cytoplasmic side. The chain crosses the membrane as a helical span at residues 770–792 (FIGFTMYTTCIIWLAFLPIFYVT). Residues 793–802 (SSDYRVQTTT) are Extracellular-facing. Residues 803–828 (MCISVSLSGFVVLGCLFAPKVHIILF) form a helical membrane-spanning segment. Topologically, residues 829-879 (QPQKNVVTHRLHLNRFSVSGTGTTYSQSSASTYVPTVCNGREVLDSTTSSL) are cytoplasmic.

It belongs to the G-protein coupled receptor 3 family. In terms of assembly, interacts with TAMALIN. As to expression, detected in brain cortex, thalamus, subthalamic nucleus, substantia nigra, hypothalamus, hippocampus, corpus callosum, caudate nucleus and amygdala.

Its subcellular location is the cell membrane. In terms of biological role, G-protein coupled receptor for glutamate. Ligand binding causes a conformation change that triggers signaling via guanine nucleotide-binding proteins (G proteins) and modulates the activity of down-stream effectors. Signaling inhibits adenylate cyclase activity. This chain is Metabotropic glutamate receptor 3 (GRM3), found in Homo sapiens (Human).